The primary structure comprises 598 residues: Insulin-like growth factor 2 mRNA-binding protein 1 (598 aa).

RRM domains lie at 2 to 75 (NKLY…HSVP) and 81 to 156 (RKLQ…YIPD). The segment at 155–195 (PDENSEVDSQRGPDNGRRPGYGPRGTSRQMSPGSGIPSKHQ) is disordered. Positions 162 to 171 (DSQRGPDNGR) are enriched in basic and acidic residues. Ser185 carries the phosphoserine modification. KH domains are found at residues 198-263 (DIPL…CRMI) and 279-346 (EVPL…EQEI). Position 399 is a phosphotyrosine (Tyr399). KH domains are found at residues 407–472 (QETV…QGRI) and 489–555 (KLET…QRKI). The disordered stretch occupies residues 561–598 (QVKQQQKGGGMGTPQGPHPQGMTELGSPQGLAQEPRRK). A phosphothreonine mark is found at Thr573 and Thr583. Residues 574 to 583 (PQGPHPQGMT) are compositionally biased toward low complexity. Ser587 is modified (phosphoserine).

Belongs to the RRM IMP/VICKZ family. In terms of assembly, component of the CRD-mediated complex.

It is found in the nucleus. It localises to the cytoplasm. The protein resides in the perinuclear region. Its subcellular location is the P-body. The protein localises to the stress granule. It is found in the cell projection. It localises to the growth cone. The protein resides in the filopodium. Its subcellular location is the lamellipodium. Functionally, RNA-binding factor that recruits target transcripts to cytoplasmic protein-RNA complexes (mRNPs). This transcript 'caging' into mRNPs allows mRNA transport and transient storage. It also modulates the rate and location at which target transcripts encounter the translational apparatus and shields them from endonuclease attacks or microRNA-mediated degradation. Preferentially binds to N6-methyladenosine (m6A)-containing mRNAs and increases their stability. Plays a direct role in the transport and translation of transcripts required for axonal regeneration in adult sensory neurons. Regulates localized beta-actin/ACTB mRNA translation in polarized cells, a crucial process for cell migration and neurite outgrowth. Promotes the directed movement of cells by fine-tuning intracellular signaling networks and enhances the velocity of cell migration. This chain is Insulin-like growth factor 2 mRNA-binding protein 1 (igf2bp1), found in Danio rerio (Zebrafish).